A 492-amino-acid chain; its full sequence is MPSTNPFLTLPYEPAFASLGSEFSDPVEAATFPAHQLRFRNDRLLPILGLDPATVTDEHFIEAFGRFQGRSPLLAMRYHGYQFGIYNPDLGDGRGFLYGQVRGRNGWLYDFGTKGSGRTPYSRGGDGKLTLKGGVREVLASEFLQRLGVRTGRCLSLIETGEELWRGDEPSPTRSSVMVRFNRTHIRFGTFERLHYFKRADLVRQLLDHVIATYYSHLLGDPEADAKFYAELTERTADLAAQWMAAGFCHAVLNTDNLSIVGESFDYGPWAFLDRFDPKFTAAYFDHSGRYRYENQPGICQLNLELLQVPLGMVMSAADLEAGIAGFGDRYQATYSRLMLRRLGFEADQLHSAIADDLIITTLQLLLRAPIGYNEFFARLRAQFQPSWRSDLSAILPDWITTDLEALPEAQWQGWRDRYHQLLTHLPESQLPLIQQQLAQANPEIAPIRPVVESVWDPIAIDDNWEPLEALLNRWRHDGDGAADGVVVPNAN.

ATP contacts are provided by Gly91, Gly93, Arg94, Lys114, Asp126, Gly127, Arg180, and Arg187. Asp256 functions as the Proton acceptor in the catalytic mechanism. Positions 257 and 266 each coordinate Mg(2+). ATP is bound at residue Asp266.

This sequence belongs to the SELO family. The cofactor is Mg(2+). It depends on Mn(2+) as a cofactor.

It carries out the reaction L-seryl-[protein] + ATP = 3-O-(5'-adenylyl)-L-seryl-[protein] + diphosphate. It catalyses the reaction L-threonyl-[protein] + ATP = 3-O-(5'-adenylyl)-L-threonyl-[protein] + diphosphate. The catalysed reaction is L-tyrosyl-[protein] + ATP = O-(5'-adenylyl)-L-tyrosyl-[protein] + diphosphate. The enzyme catalyses L-histidyl-[protein] + UTP = N(tele)-(5'-uridylyl)-L-histidyl-[protein] + diphosphate. It carries out the reaction L-seryl-[protein] + UTP = O-(5'-uridylyl)-L-seryl-[protein] + diphosphate. It catalyses the reaction L-tyrosyl-[protein] + UTP = O-(5'-uridylyl)-L-tyrosyl-[protein] + diphosphate. Its function is as follows. Nucleotidyltransferase involved in the post-translational modification of proteins. It can catalyze the addition of adenosine monophosphate (AMP) or uridine monophosphate (UMP) to a protein, resulting in modifications known as AMPylation and UMPylation. In Synechococcus elongatus (strain ATCC 33912 / PCC 7942 / FACHB-805) (Anacystis nidulans R2), this protein is Protein nucleotidyltransferase YdiU.